Consider the following 367-residue polypeptide: DNA replication and repair protein RecF (367 aa).

30–37 is an ATP binding site; it reads GANGSGKT.

Belongs to the RecF family.

It localises to the cytoplasm. Functionally, the RecF protein is involved in DNA metabolism; it is required for DNA replication and normal SOS inducibility. RecF binds preferentially to single-stranded, linear DNA. It also seems to bind ATP. This chain is DNA replication and repair protein RecF, found in Pseudomonas savastanoi pv. phaseolicola (strain 1448A / Race 6) (Pseudomonas syringae pv. phaseolicola (strain 1448A / Race 6)).